Here is a 357-residue protein sequence, read N- to C-terminus: Popeye domain-containing protein 1 (357 aa).

The Extracellular segment spans residues 1 to 38; that stretch reads MDTTAISPLTPLGVIPDLKNATSVPFNETACENWKEIH. N-linked (GlcNAc...) asparagine glycans are attached at residues N20 and N27. Residues 39 to 59 traverse the membrane as a helical segment; the sequence is HLVFHVANICFAAGLVIPTTL. The Cytoplasmic segment spans residues 60–62; the sequence is NLH. A helical transmembrane segment spans residues 63-83; sequence MIFLRGLLTVGCALFIIWATL. Residues 84–89 are Extracellular-facing; sequence YRCALD. The helical transmembrane segment at 90–110 threads the bilayer; sequence IMIWNSVFLVVNLLHFIYLVY. Residues 111–357 lie on the Cytoplasmic side of the membrane; that stretch reads KRRPIKIEKE…AEKLELQRLP (247 aa). Positions 309-323 are enriched in low complexity; it reads GTSSSSSLRPGRTSP. The segment at 309–357 is disordered; that stretch reads GTSSSSSLRPGRTSPYLRTSAKMKPIEESVEDDVFEAPSAEKLELQRLP. Over residues 347–357 the composition is skewed to basic and acidic residues; sequence SAEKLELQRLP.

Belongs to the popeye family. Homodimer. Homodimerization requires the C-terminus cytoplasmic region. Expressed in the heart and skeletal muscle (at protein level). Isoform 1 and isoform 4: expressed in heart, muscle, brain, stomach, kidney, lung and spleen.

It localises to the lateral cell membrane. The protein resides in the cell junction. Its subcellular location is the tight junction. It is found in the membrane. The protein localises to the cell membrane. It localises to the sarcolemma. The protein resides in the caveola. Cell adhesion molecule involved in the establishment and/or maintenance of cell integrity. Involved in the formation and regulation of the tight junction (TJ) paracellular permeability barrier in epithelial cells. Induces primordial adhesive contact and aggregation of epithelial cells in a Ca(2+)-independent manner. Involved in epithelial movement during corneal sheet formation and regeneration. May play a role in VAMP3-mediated vesicular transport and recycling of receptor molecules. May play a role in the regulation of cell shape and movement by modulating the Rho-GTPase activity. May be involved in skeletal muscle and heart development as well as in the maintenance of heart function. May also be involved in striated muscle regeneration and in the regulation of cell spreading. The polypeptide is Popeye domain-containing protein 1 (POPDC1) (Gallus gallus (Chicken)).